The sequence spans 754 residues: Phosphatase and actin regulator 4B (754 aa).

Basic and acidic residues predominate over residues 1–12; sequence MENRDDEVEHQH. Disordered regions lie at residues 1 to 38, 83 to 105, 120 to 625, and 637 to 666; these read MENRDDEVEHQHSTMGSEGGTAGDGTPPPKRKGKFSTL, KELPDNESGEAHGHKAPYVKNGH, VHSP…SKEQ, and LTRRLSQRPTAEELEQRNILQPKNEADRQA. The stretch at 61 to 86 is one RPEL 1 repeat; the sequence is EVLERKMSMRRPRQELIEQGVLKELP. Basic and acidic residues-rich tracts occupy residues 138–153, 184–221, and 229–241; these read PEDRRARAPSDGDHRG, HGEDIRRGGRAHAEMDKRPGLMKAPSEDGRRTRPEPDW, and SSVEEGRGRRESD. 2 stretches are compositionally biased toward low complexity: residues 296 to 307 and 316 to 333; these read SFCSSNSSSSSS and SSAGANTAPPGGAPLTTS. 4 stretches are compositionally biased toward pro residues: residues 348 to 357, 381 to 390, 427 to 445, and 460 to 478; these read KQPPMPPPKP, KPSPPMPPKR, LPPPPPSPPLPTHIPPSPP, and YPLPQPLPVHFDPPSPPED. 3 stretches are compositionally biased toward acidic residues: residues 483–503, 541–557, and 566–576; these read DEDDYSDEEEEEEDDEDDEEP, SEEEEDEEDQHPEESDS, and DESDEDEEDDS. Positions 605–615 are enriched in basic and acidic residues; sequence QAPERQAKSEH. RPEL repeat units follow at residues 635-660 and 673-698; these read TALTRRLSQRPTAEELEQRNILQPKN and RRLTRKLSQRPTVAELQARKILRFHE. A Phosphoserine modification is found at serine 642.

It belongs to the phosphatase and actin regulator family. Binds ppp1ca and actin.

The protein localises to the cytoplasm. It is found in the cell projection. It localises to the lamellipodium. Functionally, regulator of protein phosphatase 1 (PP1) required for neural tube and optic fissure closure, and enteric neural crest cell (ENCCs) migration during development. Acts as an activator of PP1. During neural tube closure, localizes to the ventral neural tube and activates PP1, leading to down-regulate cell proliferation within cranial neural tissue and the neural retina. Also acts as a regulator of migration of enteric neural crest cells (ENCCs) by activating PP1, leading to repression of the integrin signaling through the rho/rock pathway. In Danio rerio (Zebrafish), this protein is Phosphatase and actin regulator 4B (phactr4b).